Consider the following 205-residue polypeptide: Adenylyl-sulfate kinase (205 aa).

31–38 (GLSGAGKS) is an ATP binding site. Residue S105 is the Phosphoserine intermediate of the active site.

The protein belongs to the APS kinase family.

It carries out the reaction adenosine 5'-phosphosulfate + ATP = 3'-phosphoadenylyl sulfate + ADP + H(+). Its pathway is sulfur metabolism; hydrogen sulfide biosynthesis; sulfite from sulfate: step 2/3. Catalyzes the synthesis of activated sulfate. The protein is Adenylyl-sulfate kinase of Shewanella baltica (strain OS223).